The sequence spans 317 residues: Glycerol-3-phosphate dehydrogenase [NAD(P)+] (317 aa).

The NADPH site is built by serine 14, phenylalanine 15, arginine 35, and lysine 109. Lysine 109 and glycine 137 together coordinate sn-glycerol 3-phosphate. Residue alanine 141 participates in NADPH binding. Residues lysine 192, aspartate 248, serine 258, arginine 259, and asparagine 260 each coordinate sn-glycerol 3-phosphate. Catalysis depends on lysine 192, which acts as the Proton acceptor. An NADPH-binding site is contributed by arginine 259. NADPH contacts are provided by leucine 283 and glutamate 285.

The protein belongs to the NAD-dependent glycerol-3-phosphate dehydrogenase family.

The protein resides in the cytoplasm. The catalysed reaction is sn-glycerol 3-phosphate + NAD(+) = dihydroxyacetone phosphate + NADH + H(+). The enzyme catalyses sn-glycerol 3-phosphate + NADP(+) = dihydroxyacetone phosphate + NADPH + H(+). It functions in the pathway membrane lipid metabolism; glycerophospholipid metabolism. In terms of biological role, catalyzes the reduction of the glycolytic intermediate dihydroxyacetone phosphate (DHAP) to sn-glycerol 3-phosphate (G3P), the key precursor for phospholipid synthesis. The polypeptide is Glycerol-3-phosphate dehydrogenase [NAD(P)+] (Rickettsia akari (strain Hartford)).